Consider the following 185-residue polypeptide: ATP synthase subunit delta (185 aa).

Belongs to the ATPase delta chain family. F-type ATPases have 2 components, F(1) - the catalytic core - and F(0) - the membrane proton channel. F(1) has five subunits: alpha(3), beta(3), gamma(1), delta(1), epsilon(1). CF(0) has four main subunits: a(1), b(1), b'(1) and c(10-14). The alpha and beta chains form an alternating ring which encloses part of the gamma chain. F(1) is attached to F(0) by a central stalk formed by the gamma and epsilon chains, while a peripheral stalk is formed by the delta, b and b' chains.

Its subcellular location is the cellular thylakoid membrane. F(1)F(0) ATP synthase produces ATP from ADP in the presence of a proton or sodium gradient. F-type ATPases consist of two structural domains, F(1) containing the extramembraneous catalytic core and F(0) containing the membrane proton channel, linked together by a central stalk and a peripheral stalk. During catalysis, ATP synthesis in the catalytic domain of F(1) is coupled via a rotary mechanism of the central stalk subunits to proton translocation. In terms of biological role, this protein is part of the stalk that links CF(0) to CF(1). It either transmits conformational changes from CF(0) to CF(1) or is implicated in proton conduction. The chain is ATP synthase subunit delta from Cyanothece sp. (strain PCC 7425 / ATCC 29141).